The primary structure comprises 224 residues: Glutathione S-transferase U1 (224 aa).

The 80-residue stretch at 6–85 (ESVKLLGFWA…YIDQTWKNSP (80 aa)) folds into the GST N-terminal domain. Residues 16–17 (SP), 42–43 (NK), 56–57 (KV), and 69–70 (ES) each bind glutathione. A GST C-terminal domain is found at 90–217 (DPYEKAMARF…EKQIERMTKI (128 aa)). Thr151 is modified (phosphothreonine).

Belongs to the GST superfamily. Tau family.

Its subcellular location is the cytoplasm. It is found in the cytosol. It carries out the reaction RX + glutathione = an S-substituted glutathione + a halide anion + H(+). Functionally, may be involved in the conjugation of reduced glutathione to a wide number of exogenous and endogenous hydrophobic electrophiles and have a detoxification role against certain herbicides. The sequence is that of Glutathione S-transferase U1 (GSTU1) from Arabidopsis thaliana (Mouse-ear cress).